Reading from the N-terminus, the 81-residue chain is Photosystem I iron-sulfur center (81 aa).

2 consecutive 4Fe-4S ferredoxin-type domains span residues alanine 2 to tryptophan 31 and isoleucine 39 to tyrosine 68. Residues cysteine 11, cysteine 14, cysteine 17, cysteine 21, cysteine 48, cysteine 51, cysteine 54, and cysteine 58 each coordinate [4Fe-4S] cluster.

In terms of assembly, the eukaryotic PSI reaction center is composed of at least 11 subunits. [4Fe-4S] cluster serves as cofactor.

The protein localises to the plastid. The protein resides in the chloroplast thylakoid membrane. It catalyses the reaction reduced [plastocyanin] + hnu + oxidized [2Fe-2S]-[ferredoxin] = oxidized [plastocyanin] + reduced [2Fe-2S]-[ferredoxin]. Its function is as follows. Apoprotein for the two 4Fe-4S centers FA and FB of photosystem I (PSI); essential for photochemical activity. FB is the terminal electron acceptor of PSI, donating electrons to ferredoxin. The C-terminus interacts with PsaA/B/D and helps assemble the protein into the PSI complex. Required for binding of PsaD and PsaE to PSI. PSI is a plastocyanin-ferredoxin oxidoreductase, converting photonic excitation into a charge separation, which transfers an electron from the donor P700 chlorophyll pair to the spectroscopically characterized acceptors A0, A1, FX, FA and FB in turn. This chain is Photosystem I iron-sulfur center, found in Gnetum parvifolium (Small-leaved jointfir).